A 521-amino-acid chain; its full sequence is Maturase K (521 aa).

This sequence belongs to the intron maturase 2 family. MatK subfamily.

The protein localises to the plastid. Its function is as follows. Usually encoded in the trnK tRNA gene intron. Probably assists in splicing its own and other chloroplast group II introns. The protein is Maturase K of Cuscuta exaltata (Tall dodder).